The following is a 393-amino-acid chain: NAD(P)H-quinone oxidoreductase subunit H, chloroplastic (393 aa).

This sequence belongs to the complex I 49 kDa subunit family. As to quaternary structure, NDH is composed of at least 16 different subunits, 5 of which are encoded in the nucleus.

It localises to the plastid. The protein resides in the chloroplast thylakoid membrane. The catalysed reaction is a plastoquinone + NADH + (n+1) H(+)(in) = a plastoquinol + NAD(+) + n H(+)(out). It carries out the reaction a plastoquinone + NADPH + (n+1) H(+)(in) = a plastoquinol + NADP(+) + n H(+)(out). Its function is as follows. NDH shuttles electrons from NAD(P)H:plastoquinone, via FMN and iron-sulfur (Fe-S) centers, to quinones in the photosynthetic chain and possibly in a chloroplast respiratory chain. The immediate electron acceptor for the enzyme in this species is believed to be plastoquinone. Couples the redox reaction to proton translocation, and thus conserves the redox energy in a proton gradient. The sequence is that of NAD(P)H-quinone oxidoreductase subunit H, chloroplastic from Lotus japonicus (Lotus corniculatus var. japonicus).